Here is a 476-residue protein sequence, read N- to C-terminus: Adenosylhomocysteinase (476 aa).

Residues threonine 61, aspartate 140, and glutamate 200 each coordinate substrate. 201-203 (TTT) contacts NAD(+). The substrate site is built by lysine 230 and aspartate 234. NAD(+) is bound by residues asparagine 235, 264-269 (GYGDVG), glutamate 287, asparagine 322, 343-345 (IGH), and asparagine 389.

The protein belongs to the adenosylhomocysteinase family. It depends on NAD(+) as a cofactor.

It localises to the cytoplasm. It catalyses the reaction S-adenosyl-L-homocysteine + H2O = L-homocysteine + adenosine. It functions in the pathway amino-acid biosynthesis; L-homocysteine biosynthesis; L-homocysteine from S-adenosyl-L-homocysteine: step 1/1. In terms of biological role, may play a key role in the regulation of the intracellular concentration of adenosylhomocysteine. The sequence is that of Adenosylhomocysteinase from Acidovorax sp. (strain JS42).